The following is a 265-amino-acid chain: MKLFVFLALAVAAATAVPAPAQKLTPTPIKDIQGRITNGYPAYEGKVPYIVGLLFSGNGNWWCGGSIIGNTWVLTAAHCTNGASGVTINYGASIRTQPQYTHWVGSGDIIQHHHYNSGNLHNDISLIRTPHVDFWSLVNKVELPSYNDRYQDYAGWWAVASGWGGTYDGSPLPDWLQSVDVQIISQSDCSRTWSLHDNMICINTDGGKSTCGGDSGGPLVTHDGNRLVGVTSFGSAAGCQSGAPAVFSRVTGYLDWIRDNTGISY.

Positions 1–21 (MKLFVFLALAVAAATAVPAPA) are cleaved as a signal peptide. Positions 22–35 (QKLTPTPIKDIQGR) are excised as a propeptide. The Peptidase S1 domain occupies 36-262 (ITNGYPAYEG…YLDWIRDNTG (227 aa)). C63 and C79 are oxidised to a cystine. Residues H78 and D123 each act as charge relay system in the active site. Cystine bridges form between C189–C201 and C211–C239. S215 serves as the catalytic Charge relay system.

Belongs to the peptidase S1 family. As to expression, abundantly expressed in the larval gut.

In terms of biological role, major function may be to aid in digestion. This chain is Serine protease 1, found in Drosophila melanogaster (Fruit fly).